The chain runs to 229 residues: Ras-related protein RabZ (229 aa).

The segment at 1-39 (MGCFHSREPTATGKTKKEEPTSAVKTNKEEKSSNYVSEP) is disordered. Glycine 2 carries N-myristoyl glycine lipidation. A lipid anchor (S-palmitoyl cysteine) is attached at cysteine 3. A compositionally biased stretch (basic and acidic residues) spans 15–32 (TKKEEPTSAVKTNKEEKS). 57–64 (GDQATGKS) provides a ligand contact to GTP. Residues 79–88 (HKPSPIIIDC) carry the Effector region motif. Residues 106–110 (DTAGQ) and 164–167 (NKCD) each bind GTP.

The protein belongs to the small GTPase superfamily. Rab family. Post-translationally, although this sequence lacks the C-terminal cysteine motifs subject to isoprenylation in other Rab proteins, it does have N-terminal myristoylation and S-palmitoylation sequence motifs.

The sequence is that of Ras-related protein RabZ (rabZ) from Dictyostelium discoideum (Social amoeba).